The primary structure comprises 313 residues: Ribosomal RNA small subunit methyltransferase H (313 aa).

S-adenosyl-L-methionine-binding positions include 35–37, D55, F79, D101, and Q108; that span reads GGH.

It belongs to the methyltransferase superfamily. RsmH family.

Its subcellular location is the cytoplasm. The enzyme catalyses cytidine(1402) in 16S rRNA + S-adenosyl-L-methionine = N(4)-methylcytidine(1402) in 16S rRNA + S-adenosyl-L-homocysteine + H(+). Its function is as follows. Specifically methylates the N4 position of cytidine in position 1402 (C1402) of 16S rRNA. The chain is Ribosomal RNA small subunit methyltransferase H from Erwinia tasmaniensis (strain DSM 17950 / CFBP 7177 / CIP 109463 / NCPPB 4357 / Et1/99).